Here is a 366-residue protein sequence, read N- to C-terminus: 5-hydroxytryptamine receptor 1F (366 aa).

Over 1-24 the chain is Extracellular; it reads MDFLNASDQNLTSEELLNRMPSKI. Residues Asn-5 and Asn-10 are each glycosylated (N-linked (GlcNAc...) asparagine). Residues 25 to 49 traverse the membrane as a helical segment; that stretch reads LVSLTLSGLALMTTTINSLVIAAII. The Cytoplasmic portion of the chain corresponds to 50–59; sequence VTRKLHHPAN. The helical transmembrane segment at 60–81 threads the bilayer; sequence YLICSLAVTDFLVAVLVMPFSI. Residues 82–96 lie on the Extracellular side of the membrane; sequence VYIVRESWIMGQVLC. An intrachain disulfide couples Cys-96 to Cys-172. The helical transmembrane segment at 97–119 threads the bilayer; sequence DIWLSVDIICCTCSILHLSAIAL. Positions 103 and 107 each coordinate serotonin. A DRY motif; important for ligand-induced conformation changes motif is present at residues 120 to 122; sequence DRY. The Cytoplasmic portion of the chain corresponds to 120–139; it reads DRYRAITDAVEYARKRTPRH. The chain crosses the membrane as a helical span at residues 140 to 159; it reads AGIMITIVWVISVFISMPPL. Residues 160-178 lie on the Extracellular side of the membrane; sequence FWRHQGTSRDDECVIKHDH. The helical transmembrane segment at 179–202 threads the bilayer; it reads IVSTIYSTFGAFYIPLVLILILYY. Topologically, residues 203-291 are cytoplasmic; the sequence is KIYRAARTLY…KISGTRERKA (89 aa). Residues 292–315 traverse the membrane as a helical segment; that stretch reads ATTLGLILGAFVICWLPFFVKELV. The Extracellular segment spans residues 316–327; that stretch reads VNVCEKCKISEE. The chain crosses the membrane as a helical span at residues 328 to 350; sequence MSNFLAWLGYLNSLINPLIYTIF. The NPxxY motif; important for ligand-induced conformation changes and signaling signature appears at 343 to 347; sequence NPLIY. The Cytoplasmic segment spans residues 351–366; that stretch reads NEDFKKAFQKLVRCRY.

Belongs to the G-protein coupled receptor 1 family. In terms of tissue distribution, detected in hippocampus.

Its subcellular location is the cell membrane. Functionally, G-protein coupled receptor for 5-hydroxytryptamine (serotonin). Also functions as a receptor for various alkaloids and psychoactive substances. Ligand binding causes a conformation change that triggers signaling via guanine nucleotide-binding proteins (G proteins) and modulates the activity of downstream effectors, such as adenylate cyclase. HTR1F is coupled to G(i)/G(o) G alpha proteins and mediates inhibitory neurotransmission by inhibiting adenylate cyclase activity. The sequence is that of 5-hydroxytryptamine receptor 1F (Htr1f) from Mus musculus (Mouse).